Reading from the N-terminus, the 444-residue chain is Phosphoglucosamine mutase (444 aa).

The Phosphoserine intermediate role is filled by Ser-101. Residues Ser-101, Asp-240, Asp-242, and Asp-244 each coordinate Mg(2+). Position 101 is a phosphoserine (Ser-101).

Belongs to the phosphohexose mutase family. It depends on Mg(2+) as a cofactor. Post-translationally, activated by phosphorylation.

It carries out the reaction alpha-D-glucosamine 1-phosphate = D-glucosamine 6-phosphate. Catalyzes the conversion of glucosamine-6-phosphate to glucosamine-1-phosphate. The chain is Phosphoglucosamine mutase from Aeromonas hydrophila subsp. hydrophila (strain ATCC 7966 / DSM 30187 / BCRC 13018 / CCUG 14551 / JCM 1027 / KCTC 2358 / NCIMB 9240 / NCTC 8049).